Consider the following 139-residue polypeptide: MRHGKVHRKLNRTAEHRKAMFANMAASLIKHEQIVTTLPKAKELRPIVEKLVTLGKKGGLALRRQAISELRDHDQVKKLFDALAARYKDRQGGYTRIIKAGFRYGDNAPMAVIEFVDRDVDAKGQDSGPVQEKADSEAA.

Belongs to the bacterial ribosomal protein bL17 family. As to quaternary structure, part of the 50S ribosomal subunit. Contacts protein L32.

The protein is Large ribosomal subunit protein bL17 of Afipia carboxidovorans (strain ATCC 49405 / DSM 1227 / KCTC 32145 / OM5) (Oligotropha carboxidovorans).